We begin with the raw amino-acid sequence, 1289 residues long: uncharacterized protein (1289 aa).

The first 23 residues, 1–23 (MRKYTVIASILLSFLSVLSGGHH), serve as a signal peptide directing secretion. In terms of domain architecture, LTD spans 141–277 (EGYQADLAHI…VVISTNTGKD (137 aa)).

This is an uncharacterized protein from Bacillus subtilis (strain 168).